A 320-amino-acid polypeptide reads, in one-letter code: Malate dehydrogenase 2 (320 aa).

NAD(+) contacts are provided by residues Gly-10 to Gly-15 and Asp-34. Residues Arg-83 and Arg-89 each coordinate substrate. Residues Asn-96 and Ile-119–Asn-121 contribute to the NAD(+) site. 2 residues coordinate substrate: Asn-121 and Arg-152. His-176 (proton acceptor) is an active-site residue.

This sequence belongs to the LDH/MDH superfamily. MDH type 3 family.

It carries out the reaction (S)-malate + NAD(+) = oxaloacetate + NADH + H(+). Functionally, catalyzes the reversible oxidation of malate to oxaloacetate. The sequence is that of Malate dehydrogenase 2 from Rhodopseudomonas palustris (strain BisB18).